The chain runs to 225 residues: Ribonuclease 3 (225 aa).

In terms of domain architecture, RNase III spans Phe4–Asn133. A Mg(2+)-binding site is contributed by Glu46. Residue Asp50 is part of the active site. Mg(2+) contacts are provided by Asn119 and Glu122. Residue Glu122 is part of the active site. A DRBM domain is found at Asp158 to Lys225.

Belongs to the ribonuclease III family. As to quaternary structure, homodimer. Mg(2+) is required as a cofactor.

It is found in the cytoplasm. The enzyme catalyses Endonucleolytic cleavage to 5'-phosphomonoester.. Functionally, digests double-stranded RNA. Involved in the processing of primary rRNA transcript to yield the immediate precursors to the large and small rRNAs (23S and 16S). Processes some mRNAs, and tRNAs when they are encoded in the rRNA operon. Processes pre-crRNA and tracrRNA of type II CRISPR loci if present in the organism. The chain is Ribonuclease 3 from Rickettsia prowazekii (strain Madrid E).